Reading from the N-terminus, the 186-residue chain is Protein GrpE (186 aa).

Composition is skewed to basic and acidic residues over residues 1-13 and 23-34; these read MSDN…EEQH and EETHQAEDAVEH. The disordered stretch occupies residues 1–34; sequence MSDNKTELNEEQHNATAEGEVSEETHQAEDAVEH.

Belongs to the GrpE family. Homodimer.

It is found in the cytoplasm. Its function is as follows. Participates actively in the response to hyperosmotic and heat shock by preventing the aggregation of stress-denatured proteins, in association with DnaK and GrpE. It is the nucleotide exchange factor for DnaK and may function as a thermosensor. Unfolded proteins bind initially to DnaJ; upon interaction with the DnaJ-bound protein, DnaK hydrolyzes its bound ATP, resulting in the formation of a stable complex. GrpE releases ADP from DnaK; ATP binding to DnaK triggers the release of the substrate protein, thus completing the reaction cycle. Several rounds of ATP-dependent interactions between DnaJ, DnaK and GrpE are required for fully efficient folding. This is Protein GrpE from Hydrogenovibrio crunogenus (strain DSM 25203 / XCL-2) (Thiomicrospira crunogena).